The sequence spans 97 residues: Sm-like protein LSM3A (97 aa).

Serine 2 bears the N-acetylserine mark. A Sm domain is found at glutamate 11–threonine 96.

It belongs to the snRNP Sm proteins family. As to quaternary structure, component of the heptameric LSM1-LSM7 complex that forms a seven-membered ring structure with a donut shape. The LSM subunits are arranged in the order LSM1, LSM2, LSM3, LSM6, LSM5, LSM7 and LSM4. Component of the heptameric LSM2-LSM8 complex that forms a seven-membered ring structure with a donut shape. The LSM subunits are arranged in the order LSM8, LSM2, LSM3, LSM6, LSM5, LSM7 and LSM4. LSM3A subunit interacts only with its two neighboring subunits, LSM2 and LSM6A or LSM6B. As to expression, expressed in roots, leaves, stems, flowers and siliques.

The protein resides in the cytoplasm. It is found in the nucleus. Functionally, component of LSM protein complexes, which are involved in RNA processing. Component of the cytoplasmic LSM1-LSM7 complex which is involved in mRNA degradation by promoting decapping and leading to accurate 5'-3' mRNA decay. The cytoplasmic LSM1-LSM7 complex regulates developmental gene expression by the decapping of specific development-related transcripts. Component of the nuclear LSM2-LSM8 complex which is involved splicing nuclear mRNAs. LSM2-LSM8 binds directly to the U6 small nuclear RNAs (snRNAs) and is essential for accurate splicing of selected development-related mRNAs through the stabilization of the spliceosomal U6 snRNA. Plays a critical role in the regulation of development-related gene expression. The polypeptide is Sm-like protein LSM3A (Arabidopsis thaliana (Mouse-ear cress)).